Here is a 294-residue protein sequence, read N- to C-terminus: uncharacterized protein (294 aa).

The protein resides in the mitochondrion. This is an uncharacterized protein from Zea mays (Maize).